The sequence spans 885 residues: Leucine--tRNA ligase (885 aa).

Positions 46–56 (PYPSGALHMGH) match the 'HIGH' region motif. Positions 638-642 (KMSKS) match the 'KMSKS' region motif. Lysine 641 provides a ligand contact to ATP.

It belongs to the class-I aminoacyl-tRNA synthetase family.

The protein resides in the cytoplasm. The catalysed reaction is tRNA(Leu) + L-leucine + ATP = L-leucyl-tRNA(Leu) + AMP + diphosphate. In Xanthomonas campestris pv. campestris (strain B100), this protein is Leucine--tRNA ligase.